The sequence spans 462 residues: Probable peptidoglycan glycosyltransferase FtsW (462 aa).

The segment at 1–28 (MREPRHVPQLRASGRRFPQRGRRHRFGK) is disordered. At 1 to 92 (MREPRHVPQL…RSRMLDFDYS (92 aa)) the chain is on the cytoplasmic side. Over residues 13–27 (SGRRFPQRGRRHRFG) the composition is skewed to basic residues. A helical transmembrane segment spans residues 93-113 (LLWVSIALLGLGVVMVYSASI). At 114-127 (AMPDSPKYASYHDY) the chain is on the periplasmic side. Residues 128 to 148 (AFLLRHCVSLVVAFVAAVIAF) form a helical membrane-spanning segment. Topologically, residues 149–158 (RVPVSTWDKY) are cytoplasmic. The chain crosses the membrane as a helical span at residues 159–179 (APHLFLIALVGLVIVLIPHIG). The Periplasmic segment spans residues 180 to 192 (KGVNGARRWIPLG). A helical transmembrane segment spans residues 193–215 (ITNMQPSEIMKLAVTIYAANYTV). Topologically, residues 216–223 (RKQEYMQS) are cytoplasmic. Residues 224–244 (FAKGFLPMAFAVGLVGALLLL) traverse the membrane as a helical segment. The Periplasmic segment spans residues 245 to 247 (EPD). A helical membrane pass occupies residues 248–268 (MGAFMVVAAIAMGVLFLGGVN). At 269–270 (GK) the chain is on the cytoplasmic side. The chain crosses the membrane as a helical span at residues 271 to 291 (LFGGLVATAVGTFTMLVWLSP). The Periplasmic segment spans residues 292 to 349 (WRRERIFAYLDPWDERYAQGKAYQLTHSLIAFGRGEWFGVGLGGSVEKLNYLPEAHTD). A helical transmembrane segment spans residues 350–370 (FILAVIGEELGFVGVLVVILL). Over 371–398 (FYWIVRRSFEIGRQALALDRTFAGLMAK) the chain is Cytoplasmic. The chain crosses the membrane as a helical span at residues 399–419 (GVGIWFGAQAFINMGVNLGLL). Residues 420 to 425 (PTKGLT) are Periplasmic-facing. The helical transmembrane segment at 426 to 446 (LPLVSYGGSGILLNCISLAVL) threads the bilayer. Over 447-462 (LRVDYENRVLMRGGKV) the chain is Cytoplasmic.

This sequence belongs to the SEDS family. FtsW subfamily.

The protein localises to the cell inner membrane. It carries out the reaction [GlcNAc-(1-&gt;4)-Mur2Ac(oyl-L-Ala-gamma-D-Glu-L-Lys-D-Ala-D-Ala)](n)-di-trans,octa-cis-undecaprenyl diphosphate + beta-D-GlcNAc-(1-&gt;4)-Mur2Ac(oyl-L-Ala-gamma-D-Glu-L-Lys-D-Ala-D-Ala)-di-trans,octa-cis-undecaprenyl diphosphate = [GlcNAc-(1-&gt;4)-Mur2Ac(oyl-L-Ala-gamma-D-Glu-L-Lys-D-Ala-D-Ala)](n+1)-di-trans,octa-cis-undecaprenyl diphosphate + di-trans,octa-cis-undecaprenyl diphosphate + H(+). Its pathway is cell wall biogenesis; peptidoglycan biosynthesis. Peptidoglycan polymerase that is essential for cell division. In Burkholderia thailandensis (strain ATCC 700388 / DSM 13276 / CCUG 48851 / CIP 106301 / E264), this protein is Probable peptidoglycan glycosyltransferase FtsW.